The chain runs to 1321 residues: Bile salt export pump (1321 aa).

The Cytoplasmic segment spans residues 1-62 (MSDSVILRSV…FSSSKDNWLM (62 aa)). In terms of domain architecture, ABC transmembrane type-1 1 spans 62-385 (MFMGSVCALL…ASSCLEIFST (324 aa)). The helical transmembrane segment at 63–83 (FMGSVCALLHGMAQPGMIIVF) threads the bilayer. At 84–147 (GILTDIFVEY…VIKFSGIYAG (64 aa)) the chain is on the extracellular side. N-linked (GlcNAc...) asparagine glycans are attached at residues Asn-109, Asn-116, Asn-122, and Asn-125. A helical transmembrane segment spans residues 148-168 (VGVAVLILGYFQIRLWVITGA). Topologically, residues 169 to 215 (RQIRKMRKFYFRRIMRMEIGWFDCTSVGELNSRFSDDINKIDEAIAD) are cytoplasmic. A helical membrane pass occupies residues 216–236 (QMALFLQRLSTALSGLLLGFY). Residues 237–240 (RGWK) lie on the Extracellular side of the membrane. The helical transmembrane segment at 241–261 (LTLVILAVSPLIGIGAAVIGL) threads the bilayer. The Cytoplasmic portion of the chain corresponds to 262–319 (SVAKFTELELKAYAKAGSIADEVLSSIRTVAAFGGENKEVERYEKNLMFAQRWGIWKG). A helical transmembrane segment spans residues 320–340 (MVMGFFTGYMWCLIFFCYALA). Topologically, residues 341–353 (FWYGSRLVLDEGE) are extracellular. A helical transmembrane segment spans residues 354–374 (YTPGTLIQIFLCVIIAAMNIG). The Cytoplasmic portion of the chain corresponds to 375 to 755 (NASSCLEIFS…KYNISEWPYI (381 aa)). One can recognise an ABC transporter 1 domain in the interval 420–656 (IEFHNVTFHY…KGVYFMLVTL (237 aa)). Residue 455–462 (GSSGAGKS) coordinates ATP. Position 586 is a phosphothreonine (Thr-586). Residue Ser-587 is modified to Phosphoserine. Positions 651–674 (FMLVTLQSQEDNTHKETGIKGKDT) are interaction with HAX1. Positions 662–684 (NTHKETGIKGKDTTEGDTPERTF) are enriched in basic and acidic residues. Residues 662 to 722 (NTHKETGIKG…PLAIGDHKSS (61 aa)) are disordered. Phosphoserine is present on residues Ser-692, Ser-703, and Ser-706. Positions 755–1043 (ILVGALCAAI…TFSYTPSYAK (289 aa)) constitute an ABC transmembrane type-1 2 domain. A helical membrane pass occupies residues 756 to 776 (LVGALCAAINGAVTPIYSLLF). At 777–794 (SQILKTFSLVDKEQQRSE) the chain is on the extracellular side. The chain crosses the membrane as a helical span at residues 795–815 (IYSMCLFFVILGCVSLFTQFL). At 816–869 (QGYNFAKSGELLTKRLRKFGFKAMLRQDIGWFDDLKNNPGVLTTRLATDASQVQ) the chain is on the cytoplasmic side. Helical transmembrane passes span 870 to 890 (GATG…FVAV) and 891 to 911 (LIAF…FPFL). Residues 912 to 979 (ALSGAVQTKM…SYKTAIRKAN (68 aa)) lie on the Cytoplasmic side of the membrane. The chain crosses the membrane as a helical span at residues 980–1000 (VYGLCYAFSQGISFLANSAAY). At 1001–1011 (RYGGYLIVYED) the chain is on the extracellular side. A helical membrane pass occupies residues 1012 to 1032 (LNFSYVFRVVSSIAMSATAVG). Residues 1033 to 1321 (RTFSYTPSYA…KLVITGAPIS (289 aa)) are Cytoplasmic-facing. One can recognise an ABC transporter 2 domain in the interval 1078-1316 (IDFIDCKFTY…KGAYYKLVIT (239 aa)). 1113 to 1120 (GSSGCGKS) contributes to the ATP binding site. Ser-1321 carries the phosphoserine modification.

Belongs to the ABC transporter superfamily. ABCB family. Multidrug resistance exporter (TC 3.A.1.201) subfamily. Interacts with HAX1. Interacts with the adapter protein complex 2 (AP-2) throught AP2A2 or AP2A1; this interaction regulates cell membrane expression of ABCB11 through its internalization in a clathrin-dependent manner and its subsequent degradation. N-glycosylated. Post-translationally, ubiquitinated; short-chain ubiquitination regulates cell-Surface expression of ABCB11. In terms of tissue distribution, expressed predominantly, if not exclusively in the liver, where it was further localized to the canalicular microvilli and to subcanalicular vesicles of the hepatocytes by in situ.

The protein resides in the apical cell membrane. It localises to the recycling endosome membrane. The protein localises to the endosome. It is found in the cell membrane. The catalysed reaction is cholate(in) + ATP + H2O = cholate(out) + ADP + phosphate + H(+). It carries out the reaction taurocholate(in) + ATP + H2O = taurocholate(out) + ADP + phosphate + H(+). The enzyme catalyses glycocholate(in) + ATP + H2O = glycocholate(out) + ADP + phosphate + H(+). It catalyses the reaction glycochenodeoxycholate(in) + ATP + H2O = glycochenodeoxycholate(out) + ADP + phosphate + H(+). The catalysed reaction is taurochenodeoxycholate(in) + ATP + H2O = taurochenodeoxycholate(out) + ADP + phosphate + H(+). It carries out the reaction glycoursodeoxycholate(in) + ATP + H2O = glycoursodeoxycholate(out) + ADP + phosphate + H(+). The enzyme catalyses tauroursodeoxycholate(in) + ATP + H2O = tauroursodeoxycholate(out) + ADP + phosphate + H(+). It catalyses the reaction taurodeoxycholate(in) + ATP + H2O = taurodeoxycholate(out) + ADP + phosphate + H(+). The catalysed reaction is taurolithocholate 3-sulfate(in) + ATP + H2O = taurolithocholate 3-sulfate(out) + ADP + phosphate + H(+). It carries out the reaction pravastatin(in) + ATP + H2O = pravastatin(out) + ADP + phosphate + H(+). Its activity is regulated as follows. The uptake of taurocholate is inhibited by taurolithocholate sulfate with an IC(50) of 9 uM. Pravastatin competitively inhibits the transport of taurocholic acid. Cyclosporin A, glibenclamide, rifampicin and troglitazonestrongly competitively inhibit the transport activity of taurocholate. The canalicular transport activity of taurocholate is strongly dependent on canalicular membrane cholesterol content. The uptake of taurocholate is increased by short- and medium-chain fatty acids. Cholesterol increases transport capacity of taurocholate without affecting the affinity for the substrate. In terms of biological role, catalyzes the transport of the major hydrophobic bile salts, such as taurine and glycine-conjugated cholic acid across the canalicular membrane of hepatocytes in an ATP-dependent manner, therefore participates in hepatic bile acid homeostasis and consequently to lipid homeostasis through regulation of biliary lipid secretion in a bile salts dependent manner. Transports taurine-conjugated bile salts more rapidly than glycine-conjugated bile salts. Also transports non-bile acid compounds, such as pravastatin and fexofenadine in an ATP-dependent manner and may be involved in their biliary excretion. In Mus musculus (Mouse), this protein is Bile salt export pump.